We begin with the raw amino-acid sequence, 160 residues long: uncharacterized protein (160 aa).

A helical membrane pass occupies residues Tyr137–Val157.

Its subcellular location is the host membrane. The protein resides in the virion. This is an uncharacterized protein from Acanthamoeba polyphaga mimivirus (APMV).